Here is a 234-residue protein sequence, read N- to C-terminus: MKNMLLMSGSKYKDTAYLVHTLPWLAQFLADYKGKKVAFVPYAGVRRSFDEYETTVKNALQSLELEIVSVHRGKQHRDIIEQADVIAIGGGNTFCLLKQMYEHDLLDAIRAKVNSGTPYFGWSAGANVAGSSIMTTNDMPITYPPSFNALNLFPHQINPHFISGKMQGHNGESREERLEEFLIVNPQSLVYAMPEGTALHIQGEQATVLGAQDILCFSEKMQLDTKAVNSTFNY.

Catalysis depends on charge relay system residues serine 123, aspartate 138, and histidine 160.

The protein belongs to the peptidase S51 family.

The protein localises to the cytoplasm. It catalyses the reaction Dipeptidase E catalyzes the hydrolysis of dipeptides Asp-|-Xaa. It does not act on peptides with N-terminal Glu, Asn or Gln, nor does it cleave isoaspartyl peptides.. Hydrolyzes dipeptides containing N-terminal aspartate residues. May play a role in allowing the cell to use peptide aspartate to spare carbon otherwise required for the synthesis of the aspartate family of amino acids. The protein is Peptidase E of Actinobacillus pleuropneumoniae serotype 5b (strain L20).